A 394-amino-acid chain; its full sequence is Putative FNIP repeat-containing protein R636 (394 aa).

FNIP repeat units lie at residues phenylalanine 126–tyrosine 167, phenylalanine 168–glycine 207, and phenylalanine 210–alanine 250.

The sequence is that of Putative FNIP repeat-containing protein R636 from Acanthamoeba polyphaga mimivirus (APMV).